Reading from the N-terminus, the 484-residue chain is tRNA sulfurtransferase (484 aa).

A THUMP domain is found at Lys63–Gln167. ATP is bound by residues Leu185–Met186, Lys267, Gly289, and Gln298. An intrachain disulfide couples Cys346 to Cys457. The Rhodanese domain maps to Ala405 to Pro483. Residue Cys457 is the Cysteine persulfide intermediate of the active site.

Belongs to the ThiI family.

Its subcellular location is the cytoplasm. It catalyses the reaction [ThiI sulfur-carrier protein]-S-sulfanyl-L-cysteine + a uridine in tRNA + 2 reduced [2Fe-2S]-[ferredoxin] + ATP + H(+) = [ThiI sulfur-carrier protein]-L-cysteine + a 4-thiouridine in tRNA + 2 oxidized [2Fe-2S]-[ferredoxin] + AMP + diphosphate. The enzyme catalyses [ThiS sulfur-carrier protein]-C-terminal Gly-Gly-AMP + S-sulfanyl-L-cysteinyl-[cysteine desulfurase] + AH2 = [ThiS sulfur-carrier protein]-C-terminal-Gly-aminoethanethioate + L-cysteinyl-[cysteine desulfurase] + A + AMP + 2 H(+). The protein operates within cofactor biosynthesis; thiamine diphosphate biosynthesis. In terms of biological role, catalyzes the ATP-dependent transfer of a sulfur to tRNA to produce 4-thiouridine in position 8 of tRNAs, which functions as a near-UV photosensor. Also catalyzes the transfer of sulfur to the sulfur carrier protein ThiS, forming ThiS-thiocarboxylate. This is a step in the synthesis of thiazole, in the thiamine biosynthesis pathway. The sulfur is donated as persulfide by IscS. This Pseudomonas fluorescens (strain Pf0-1) protein is tRNA sulfurtransferase.